Here is a 468-residue protein sequence, read N- to C-terminus: MRISALEGCRVALWGWGRESRAAYRTFRAAFPKQPLTLFCTIAEATEVQALADPVLSIETEVSVPRLAAFDVVIKSPGISPYSPLAVAATAAGAHFIGGTQLWFAAHADTDGVVPGAVCVTGTKGKSTTTALLAHLLRAAGHCTALAGNIGMPLLELLTPQPTPEYWAIELSSYQTGDVARSGARPVLALVLNVFPEHLDWHGSEQRYINDKLSLVTVTRPRIALLNAADPRLASLALPQSDLRWFNRRDGWHVRGQVVYRGDRAVLDTALIPLPGAHNGSNVCAVLATLEALGLNAVALAPAACNFHPLPNRLQFLGERDGILWVNDSISTTPHATLAALDCFLGRCRVAVLVGGYDRGVDWECFAARITRKVPLDIVTMGANGPHIQALLAPLAAGRFGLHAAVDLPQAVALARTALGAQGGVLLLSPGAPSFGAYQDYVARGRHFAILAGFDPEVISSISGLGIA.

122–128 contributes to the ATP binding site; it reads GTKGKST.

The protein belongs to the MurCDEF family. MurD2 subfamily.

The protein localises to the cytoplasm. The catalysed reaction is UDP-N-acetyl-alpha-D-muramoyl-L-alanine + L-glutamate + ATP = UDP-N-acetyl-alpha-D-muramoyl-L-alanyl-L-glutamate + ADP + phosphate + H(+). It participates in cell wall biogenesis; peptidoglycan biosynthesis. Cell wall formation. Catalyzes the addition of L-glutamate to the nucleotide precursor UDP-N-acetylmuramoyl-L-alanine. The protein is UDP-N-acetylmuramoyl-L-alanine--L-glutamate ligase of Xylella fastidiosa (strain 9a5c).